Here is a 964-residue protein sequence, read N- to C-terminus: Translation initiation factor IF-2 (964 aa).

Positions 105–119 are enriched in low complexity; that stretch reads AALAESEASEAAPVV. 2 disordered regions span residues 105-133 and 146-378; these read AALA…EHRR and KARQ…PTEP. Basic and acidic residues-rich tracts occupy residues 123–133, 146–183, 197–253, and 266–278; these read EVARREEEHRR, KARQ…KAEE, EAPR…RAIR, and PAER…KKAE. Residues 288–302 show a composition bias toward low complexity; the sequence is KPAGEARPAAAKKPA. Residues 303-313 are compositionally biased toward pro residues; the sequence is APAPAAAPAPG. One can recognise a tr-type G domain in the interval 464–633; it reads TRPPVVTVMG…LLQAEVLELK (170 aa). The G1 stretch occupies residues 473-480; the sequence is GHVDHGKT. Position 473–480 (473–480) interacts with GTP; it reads GHVDHGKT. The G2 stretch occupies residues 498–502; it reads GITQH. Residues 519–522 form a G3 region; sequence DTPG. GTP contacts are provided by residues 519 to 523 and 573 to 576; these read DTPGH and TKVD. The interval 573–576 is G4; sequence TKVD. The segment at 609 to 611 is G5; it reads SAK.

This sequence belongs to the TRAFAC class translation factor GTPase superfamily. Classic translation factor GTPase family. IF-2 subfamily.

Its subcellular location is the cytoplasm. One of the essential components for the initiation of protein synthesis. Protects formylmethionyl-tRNA from spontaneous hydrolysis and promotes its binding to the 30S ribosomal subunits. Also involved in the hydrolysis of GTP during the formation of the 70S ribosomal complex. This Ralstonia pickettii (strain 12J) protein is Translation initiation factor IF-2.